We begin with the raw amino-acid sequence, 284 residues long: Tropomyosin (284 aa).

A coiled-coil region spans residues 1–284 (MDAIKKKMQA…DMTFTELIGN (284 aa)).

This sequence belongs to the tropomyosin family. Homodimer.

Tropomyosin, in association with the troponin complex, plays a central role in the calcium dependent regulation of muscle contraction. The polypeptide is Tropomyosin (Periplaneta fuliginosa (Smokybrown cockroach)).